The following is a 182-amino-acid chain: Putative pre-16S rRNA nuclease (182 aa).

It belongs to the YqgF nuclease family.

Its subcellular location is the cytoplasm. Its function is as follows. Could be a nuclease involved in processing of the 5'-end of pre-16S rRNA. The polypeptide is Putative pre-16S rRNA nuclease (Corynebacterium aurimucosum (strain ATCC 700975 / DSM 44827 / CIP 107346 / CN-1) (Corynebacterium nigricans)).